A 501-amino-acid polypeptide reads, in one-letter code: Cytochrome P450 81F4 (501 aa).

A Glycyl lysine isopeptide (Lys-Gly) (interchain with G-Cter in ubiquitin) cross-link involves residue Lys245. Residues 285-305 (IIIKGLMLGIMVASSETSALT) form a helical membrane-spanning segment. Cys435 provides a ligand contact to heme.

This sequence belongs to the cytochrome P450 family. Heme serves as cofactor.

It localises to the membrane. It functions in the pathway secondary metabolite biosynthesis. Involved in indole glucosinolate biosynthesis. Catalyzes hydroxylation reactions of the glucosinolate indole ring. Converts indol-3-yl-methylglucosinolate (I3M) to 1-hydroxy-indol-3-yl-methylglucosinolate (1OH-I3M) intermediate. This hydroxy intermediates is converted to 1-methoxy-indol-3-yl-methylglucosinolate (1MO-I3M) by indole glucosinolate methyltransferase 1 and 2 (IGMT1 and IGMT2). The sequence is that of Cytochrome P450 81F4 from Arabidopsis thaliana (Mouse-ear cress).